Here is a 261-residue protein sequence, read N- to C-terminus: Carbonic anhydrase 1 (261 aa).

Positions 1 to 31 are disordered; it reads MASPDWGYDDKNGPEQWSKLYPIANGNNQSP. Ala-2 carries the N-acetylalanine modification. In terms of domain architecture, Alpha-carbonic anhydrase spans 4-261; it reads PDWGYDDKNG…LKGRTVRASF (258 aa). His-65 acts as the Proton donor/acceptor in catalysis. 5 residues coordinate Zn(2+): His-65, His-68, His-95, His-97, and His-120. Substrate-binding positions include Thr-200 and 200 to 201; that span reads TH. His-201 provides a ligand contact to Zn(2+). The tract at residues 241–261 is disordered; sequence PMQHNNRPTQPLKGRTVRASF.

Belongs to the alpha-carbonic anhydrase family. Requires Zn(2+) as cofactor.

Its subcellular location is the cytoplasm. It carries out the reaction hydrogencarbonate + H(+) = CO2 + H2O. The catalysed reaction is urea = cyanamide + H2O. With respect to regulation, activated by histamine, imidazole, L-adrenaline, L- and D-histidine, and L- and D-phenylalanine. Inhibited by coumarins, sulfonamide derivatives such as acetazolamide, benzenesulfonamide and derivatives (4-carboxyethylbenzene-sulfonamide, 4-carboxyethylbenzene-sulfonamide ethyl ester, 4-(acetyl-2-aminoethyl)benzene-sulfonamide, 4-aminoethylbenzene-sulfonamide), and 'prong inhibitors' BR15, BR17, BR22 and BR30. Activated by a short exposition to Foscarnet (phosphonoformate trisodium salt), but inhibited by a long one. Esterase activity weakly reduced by cyanamide. In terms of biological role, catalyzes the reversible hydration of carbon dioxide. Can hydrate cyanamide to urea. The protein is Carbonic anhydrase 1 (CA1) of Homo sapiens (Human).